The chain runs to 263 residues: Probable ribosomal RNA small subunit methyltransferase A (263 aa).

S-adenosyl-L-methionine is bound by residues Leu12, Gly37, Glu58, Asp83, and Asn100.

Belongs to the class I-like SAM-binding methyltransferase superfamily. rRNA adenine N(6)-methyltransferase family. RsmA subfamily.

The protein localises to the cytoplasm. Specifically dimethylates two adjacent adenosines in the loop of a conserved hairpin near the 3'-end of 16S rRNA in the 30S particle. May play a critical role in biogenesis of 30S subunits. The protein is Probable ribosomal RNA small subunit methyltransferase A of Methanococcus maripaludis (strain C5 / ATCC BAA-1333).